The following is a 696-amino-acid chain: DNA ligase (696 aa).

NAD(+)-binding positions include 36–40 (DAEYD), 85–86 (SL), and glutamate 123. Lysine 125 serves as the catalytic N6-AMP-lysine intermediate. Residues arginine 146, glutamate 181, lysine 319, and lysine 343 each contribute to the NAD(+) site. Zn(2+) contacts are provided by cysteine 437, cysteine 440, cysteine 455, and cysteine 461. The region spanning 618 to 696 (PEGTSLAGKT…EDGLKALLGL (79 aa)) is the BRCT domain.

Belongs to the NAD-dependent DNA ligase family. LigA subfamily. It depends on Mg(2+) as a cofactor. Requires Mn(2+) as cofactor.

The catalysed reaction is NAD(+) + (deoxyribonucleotide)n-3'-hydroxyl + 5'-phospho-(deoxyribonucleotide)m = (deoxyribonucleotide)n+m + AMP + beta-nicotinamide D-nucleotide.. DNA ligase that catalyzes the formation of phosphodiester linkages between 5'-phosphoryl and 3'-hydroxyl groups in double-stranded DNA using NAD as a coenzyme and as the energy source for the reaction. It is essential for DNA replication and repair of damaged DNA. This is DNA ligase from Bordetella parapertussis (strain 12822 / ATCC BAA-587 / NCTC 13253).